The following is a 661-amino-acid chain: Ubiquitin carboxyl-terminal hydrolase 51 (661 aa).

Positions Met1–Ser144 are disordered. The span at Thr21–Ser30 shows a compositional bias: polar residues. Residues Pro53–Arg71 are compositionally biased toward basic residues. Pro residues predominate over residues Ala75–Pro96. The UBP-type zinc-finger motif lies at Thr149 to Leu267. Cys151, His153, Cys192, Cys195, Cys205, Cys208, Cys213, His218, His222, His228, Cys241, and Cys244 together coordinate Zn(2+). A USP domain is found at Arg320–Gln656. Cys329 (nucleophile) is an active-site residue. The active-site Proton acceptor is the His615.

This sequence belongs to the peptidase C19 family. In terms of assembly, interacts with H2A.

It localises to the chromosome. It catalyses the reaction Thiol-dependent hydrolysis of ester, thioester, amide, peptide and isopeptide bonds formed by the C-terminal Gly of ubiquitin (a 76-residue protein attached to proteins as an intracellular targeting signal).. Functionally, specifically deubiquitinates 'Lys-14' (H2AK13Ub) and 'Lys-16'(H2AK15Ub) of histone H2A regulating the DNA damage response at double-strand breaks (DSBs). USP51 is recruited to chromatin after DNA damage and regulates the dynamic assembly/disassembly of TP53BP1 and BRCA1. Functions in DNA double-strand break repair also by mediating the deubiquitination and subsequent stabilization of DGCR8, leading to the recruitment of DGCR8 binding partners to double strand breaks such as RNF168 or MDC1. In addition, promotes the deubiquitination and stabilization of the transcriptional repressor ZEB1. The protein is Ubiquitin carboxyl-terminal hydrolase 51 of Mus musculus (Mouse).